An 86-amino-acid chain; its full sequence is Large ribosomal subunit protein bL31B (86 aa).

It belongs to the bacterial ribosomal protein bL31 family. Type B subfamily. Part of the 50S ribosomal subunit.

The polypeptide is Large ribosomal subunit protein bL31B (Salmonella arizonae (strain ATCC BAA-731 / CDC346-86 / RSK2980)).